We begin with the raw amino-acid sequence, 475 residues long: Methionine aminopeptidase 2-1 (475 aa).

Over residues 1-12 (MGSKSPEGHRQT) the composition is skewed to basic and acidic residues. The tract at residues 1-97 (MGSKSPEGHR…LKQSSPPRVL (97 aa)) is disordered. The segment covering 44–57 (NLDDDNDDDGEANE) has biased composition (acidic residues). Basic residues predominate over residues 70–83 (KKKKRKRSKKKTKK). His211 contributes to the substrate binding site. Positions 232, 243, and 312 each coordinate a divalent metal cation. His320 provides a ligand contact to substrate. A divalent metal cation contacts are provided by Glu345 and Glu456.

This sequence belongs to the peptidase M24A family. Methionine aminopeptidase eukaryotic type 2 subfamily. The cofactor is Co(2+). It depends on Zn(2+) as a cofactor. Requires Mn(2+) as cofactor. Fe(2+) serves as cofactor.

It is found in the cytoplasm. The catalysed reaction is Release of N-terminal amino acids, preferentially methionine, from peptides and arylamides.. Functionally, cotranslationally removes the N-terminal methionine from nascent proteins. The N-terminal methionine is often cleaved when the second residue in the primary sequence is small and uncharged (Met-Ala-, Cys, Gly, Pro, Ser, Thr, or Val). The protein is Methionine aminopeptidase 2-1 of Aspergillus niger (strain ATCC MYA-4892 / CBS 513.88 / FGSC A1513).